We begin with the raw amino-acid sequence, 757 residues long: Transcription regulator rua1 (757 aa).

5 disordered regions span residues 122–169, 181–218, 237–295, 372–393, and 422–582; these read SSGS…LPVS, NHQV…SNQD, RNTG…NGYT, SADC…PYPL, and MELQ…IGNA. Low complexity predominate over residues 125–165; the sequence is SATKSEPSTCSSSTDFSMSSTADASTAPQHSSSGDSSMSSG. Polar residues-rich tracts occupy residues 181–190 and 200–218; these read NHQVTTQDAS and QPPS…SNQD. Positions 240–249 are enriched in basic residues; sequence GHRQHNRHQK. The segment covering 253 to 277 has biased composition (polar residues); the sequence is LPQGQSCTNSGSSSRQVTRPNSPNH. Residues 379-393 are compositionally biased toward pro residues; the sequence is PRPPSNSPEPHPYPL. The segment covering 428–437 has biased composition (polar residues); that stretch reads PARSNSTFGR. The segment covering 439–453 has biased composition (basic residues); it reads SQRHHQPPPSHRQRS. Composition is skewed to low complexity over residues 454–465, 494–510, and 543–582; these read RTSASSISNTNA, ASQS…ATDA, and TSSS…IGNA. The C2H2-type 1 degenerate zinc-finger motif lies at 661–692; it reads REGWCSLCPQGEWYSMKRSQYLYHMQFDHGIS. Residues 717–750 form a C2H2-type 2; degenerate zinc finger; sequence GLCHHCNKWIPICFGPQRKRDFKAWFKHARKCHR.

It is found in the nucleus. Functionally, transcription factor; part of the gene cluster that mediates the biosynthesis of the glycolipid biosurfactant ustilagic acid (UA). UA is a secreted cellobiose glycolipid that is toxic for many microorganisms and confers biocontrol activity to U.maydis. Recognizes and binds to the specific 5'-T/G-G/T-C-G-C-A-T-A/T-C/T-C/T-G/A-3' upstream activating sequence found in all promoters of the UA biosynthesis genes. The polypeptide is Transcription regulator rua1 (Mycosarcoma maydis (Corn smut fungus)).